The sequence spans 308 residues: Porphobilinogen deaminase (308 aa).

An S-(dipyrrolylmethanemethyl)cysteine modification is found at cysteine 242.

The protein belongs to the HMBS family. As to quaternary structure, monomer. The cofactor is dipyrromethane.

It carries out the reaction 4 porphobilinogen + H2O = hydroxymethylbilane + 4 NH4(+). It participates in porphyrin-containing compound metabolism; protoporphyrin-IX biosynthesis; coproporphyrinogen-III from 5-aminolevulinate: step 2/4. In terms of biological role, tetrapolymerization of the monopyrrole PBG into the hydroxymethylbilane pre-uroporphyrinogen in several discrete steps. This Alkalilimnicola ehrlichii (strain ATCC BAA-1101 / DSM 17681 / MLHE-1) protein is Porphobilinogen deaminase.